A 497-amino-acid polypeptide reads, in one-letter code: MSDHEGASPASSAPSSPLVPVSPRSDHNAPESPSGDVADLYKDDDSPLAPRSPASPRKSPENSPVGSPVKTTKVVISSDEDSDDEGPSSKKQRAVLSDSDASDTEATTKKSRITLDSDDSDQEGDKQQKRKDLFGDDSDDDDFDRPKKQNDDLDELVKGDLEEDRGEQQRPIYDSDDDDGPSDRRGGRNFEWDFDKMLAEKKAERKRKTRRGKDGGIDIINDDDGMVAKLVEKMKHAAKSDRNANVERKPAFQKIKMLPEVKAIMLRAGIVEVLIENGFMSALSEWLAPLPDKCLPALDIRITVLKLLHNPRFWKLDRSTLKQSGLGKAVMMLYKHPNETKENKAIANKLIGEWARPIYHLDTDYSTVSRQEREERDYSRMPEKRKKKLHSREEEPDEDEAPKRPRIRDAEGLGPTKSLDLKPGDKGYINRARVPKPSTKDYVIRPEWRVSGEFKGEKKASGSKRYDQTLRDFQERTRKSKANRLVKVSLEGRNMGI.

Positions 1–191 (MSDHEGASPA…SDRRGGRNFE (191 aa)) are disordered. Low complexity-rich tracts occupy residues 7 to 23 (ASPA…PVSP) and 47 to 57 (PLAPRSPASPR). Composition is skewed to basic and acidic residues over residues 123 to 134 (EGDKQQKRKDLF), 144 to 160 (DRPK…VKGD), and 181 to 191 (PSDRRGGRNFE). The TFIIS N-terminal domain maps to 281–361 (SALSEWLAPL…GEWARPIYHL (81 aa)). The tract at residues 369 to 433 (SRQEREERDY…GDKGYINRAR (65 aa)) is disordered. Basic and acidic residues-rich tracts occupy residues 370–382 (RQER…SRMP) and 401–411 (APKRPRIRDAE).

Belongs to the IWS1 family.

Its subcellular location is the nucleus. This Caenorhabditis briggsae protein is IWS1-like protein.